The primary structure comprises 49 residues: Astexin-2 (49 aa).

Positions 1-25 (MTKRTTIAARRVGLIDLGKATRQTK) are excised as a propeptide. The isoaspartyl glycine isopeptide (Gly-Asp) cross-link spans 26–34 (GLTQIQALD).

In terms of processing, this lasso peptide is hydrolyzed to a linear form by the isopeptidase AtxE2, in vitro. The isopeptidase AtxE2 only recognizes the threaded form (but not the unthreaded form).

It is found in the cytoplasm. The protein resides in the secreted. Its function is as follows. Shows weak antimicrobial activity against its phylogenetic relative Caulobacter crescentus. Does not show activity against other bacteria tested (E.coli, Vibrio sp, Burkhoderia thailandensis, and Salmonella newport). The protein is Astexin-2 of Asticcacaulis excentricus (strain ATCC 15261 / DSM 4724 / KCTC 12464 / NCIMB 9791 / VKM B-1370 / CB 48).